The primary structure comprises 104 residues: L-rhamnose mutarotase (104 aa).

Tyrosine 18 is a substrate binding site. Histidine 22 acts as the Proton donor in catalysis. Residues tyrosine 41 and 76–77 each bind substrate; that span reads WW. The tract at residues 85–104 is disordered; it reads PSNPDNSPISDALDPVFYLD.

This sequence belongs to the rhamnose mutarotase family. As to quaternary structure, homodimer.

The protein resides in the cytoplasm. The enzyme catalyses alpha-L-rhamnose = beta-L-rhamnose. It functions in the pathway carbohydrate metabolism; L-rhamnose metabolism. Functionally, involved in the anomeric conversion of L-rhamnose. In Pectobacterium atrosepticum (strain SCRI 1043 / ATCC BAA-672) (Erwinia carotovora subsp. atroseptica), this protein is L-rhamnose mutarotase.